The sequence spans 1160 residues: Carbamoyl phosphate synthase arginine-specific large chain, mitochondrial (1160 aa).

A carboxyphosphate synthetic domain region spans residues 81 to 478 (AEHEKVKKVV…SLQKALRQVD (398 aa)). The ATP site is built by arginine 208, arginine 248, glycine 254, glycine 255, lysine 285, leucine 287, glutamate 292, glycine 318, isoleucine 319, histidine 320, glutamine 361, and glutamate 375. An ATP-grasp 1 domain is found at 212 to 404 (AKALNEINIP…LAYTAAKIAL (193 aa)). Residues glutamine 361, glutamate 375, and asparagine 377 each contribute to the Mg(2+) site. Glutamine 361, glutamate 375, and asparagine 377 together coordinate Mn(2+). Residues 479–623 (PSFLGFMAMP…YTSYNASSHD (145 aa)) are oligomerization domain. Positions 624 to 1012 (IDFNEHGTMV…AYWAALQSTQ (389 aa)) are carbamoyl phosphate synthetic domain. An ATP-grasp 2 domain is found at 748–946 (SQILDKIGVD…FIDVATRSII (199 aa)). 10 residues coordinate ATP: arginine 784, lysine 823, isoleucine 825, glutamate 830, glycine 855, valine 856, histidine 857, serine 858, glutamine 898, and glutamate 917. Glutamine 898, glutamate 917, and asparagine 919 together coordinate Mg(2+). Glutamine 898, glutamate 917, and asparagine 919 together coordinate Mn(2+). The interval 1013–1144 (NFKIPLPGQG…PSVLSEKKEM (132 aa)) is allosteric domain. The region spanning 1014-1160 (FKIPLPGQGI…WSEWIGSHDL (147 aa)) is the MGS-like domain.

Belongs to the CarB family. Heterodimer composed of 2 chains; the small (or glutamine) chain promotes the hydrolysis of glutamine to ammonia, which is used by the large (or ammonia) chain to synthesize carbamoyl phosphate. The cofactor is Mg(2+). Mn(2+) is required as a cofactor.

The protein localises to the mitochondrion. The catalysed reaction is hydrogencarbonate + L-glutamine + 2 ATP + H2O = carbamoyl phosphate + L-glutamate + 2 ADP + phosphate + 2 H(+). It carries out the reaction hydrogencarbonate + NH4(+) + 2 ATP = carbamoyl phosphate + 2 ADP + phosphate + 2 H(+). Its pathway is amino-acid biosynthesis; L-arginine biosynthesis; carbamoyl phosphate from bicarbonate: step 1/1. Its function is as follows. Large subunit of the arginine-specific carbamoyl phosphate synthase (CPSase). CPSase catalyzes the formation of carbamoyl phosphate from the ammonia moiety of glutamine, hydrogencarbonate, and phosphate donated by ATP, the first step of the arginine biosynthetic pathway. The large subunit (synthetase) binds the substrates ammonia (free or transferred from glutamine from the small subunit), hydrogencarbonate and ATP and carries out an ATP-coupled ligase reaction, activating hydrogencarbonate by forming carboxy phosphate which reacts with ammonia to form carbamoyl phosphate. The sequence is that of Carbamoyl phosphate synthase arginine-specific large chain, mitochondrial (arg4) from Schizosaccharomyces pombe (strain 972 / ATCC 24843) (Fission yeast).